The chain runs to 372 residues: N-acetylneuraminate epimerase 1 (372 aa).

The signal sequence occupies residues Met-1–Ala-25. Kelch repeat units lie at residues Lys-44 to Asp-88, Lys-90 to Asn-141, His-143 to Arg-177, Asp-178 to Glu-223, Ile-226 to Ala-269, Glu-291 to Gly-340, and Met-342 to Val-371. The active-site Proton acceptor is the Glu-232.

This sequence belongs to the NanM family. Homodimer.

Its subcellular location is the periplasm. The enzyme catalyses N-acetyl-alpha-neuraminate = N-acetyl-beta-neuraminate. Its function is as follows. Converts alpha-N-acetylneuranimic acid (Neu5Ac) to the beta-anomer, accelerating the equilibrium between the alpha- and beta-anomers. Probably facilitates sialidase-negative bacteria to compete successfully for limited amounts of extracellular Neu5Ac, which is likely taken up in the beta-anomer. In addition, the rapid removal of sialic acid from solution might be advantageous to the bacterium to damp down host responses. In Escherichia coli O6:H1 (strain CFT073 / ATCC 700928 / UPEC), this protein is N-acetylneuraminate epimerase 1.